A 464-amino-acid chain; its full sequence is tRNA-2-methylthio-N(6)-dimethylallyladenosine synthase (464 aa).

Positions 5–122 (RKLYVKSFGC…LPEMLARVRD (118 aa)) constitute an MTTase N-terminal domain. The [4Fe-4S] cluster site is built by Cys-14, Cys-50, Cys-85, Cys-163, Cys-167, and Cys-170. The region spanning 149 to 383 (KKRGPTAFVT…VLEASKTAFD (235 aa)) is the Radical SAM core domain. One can recognise a TRAM domain in the interval 384–446 (RACMGRRFDI…PNSLAGQVVD (63 aa)).

This sequence belongs to the methylthiotransferase family. MiaB subfamily. Monomer. The cofactor is [4Fe-4S] cluster.

The protein localises to the cytoplasm. It catalyses the reaction N(6)-dimethylallyladenosine(37) in tRNA + (sulfur carrier)-SH + AH2 + 2 S-adenosyl-L-methionine = 2-methylsulfanyl-N(6)-dimethylallyladenosine(37) in tRNA + (sulfur carrier)-H + 5'-deoxyadenosine + L-methionine + A + S-adenosyl-L-homocysteine + 2 H(+). Catalyzes the methylthiolation of N6-(dimethylallyl)adenosine (i(6)A), leading to the formation of 2-methylthio-N6-(dimethylallyl)adenosine (ms(2)i(6)A) at position 37 in tRNAs that read codons beginning with uridine. This chain is tRNA-2-methylthio-N(6)-dimethylallyladenosine synthase, found in Azorhizobium caulinodans (strain ATCC 43989 / DSM 5975 / JCM 20966 / LMG 6465 / NBRC 14845 / NCIMB 13405 / ORS 571).